A 266-amino-acid polypeptide reads, in one-letter code: Diphthine synthase (266 aa).

Residues Leu9, Asp84, Val87, 112–113, Leu169, Ala210, and His235 contribute to the S-adenosyl-L-methionine site; that span reads SI.

It belongs to the diphthine synthase family. Homodimer.

The enzyme catalyses 2-[(3S)-amino-3-carboxypropyl]-L-histidyl-[translation elongation factor 2] + 3 S-adenosyl-L-methionine = diphthine-[translation elongation factor 2] + 3 S-adenosyl-L-homocysteine + 3 H(+). It participates in protein modification; peptidyl-diphthamide biosynthesis. Its function is as follows. S-adenosyl-L-methionine-dependent methyltransferase that catalyzes the trimethylation of the amino group of the modified target histidine residue in translation elongation factor 2 (EF-2), to form an intermediate called diphthine. The three successive methylation reactions represent the second step of diphthamide biosynthesis. This is Diphthine synthase from Methanosarcina mazei (strain ATCC BAA-159 / DSM 3647 / Goe1 / Go1 / JCM 11833 / OCM 88) (Methanosarcina frisia).